We begin with the raw amino-acid sequence, 658 residues long: Probable CoA ligase CCL6 (658 aa).

ATP contacts are provided by residues 226–234 (TSGATGEPK), 411–416 (QGYGLT), aspartate 497, 509–512 (IIDR), and lysine 632. Residues 298–411 (DIRFLMDDLQ…RVTSCAALSQ (114 aa)) are SBD1. An SBD2 region spans residues 412–477 (GYGLTESCGG…LRGTTLFSGY (66 aa)).

It belongs to the ATP-dependent AMP-binding enzyme family. Mostly expressed in glandular trichomes (lupulin glands) after flowering, and, to a lower extent, in stems, leaves, cones and flowers.

It localises to the cytoplasm. It is found in the cytosol. The sequence is that of Probable CoA ligase CCL6 from Humulus lupulus (European hop).